The primary structure comprises 295 residues: Cytidine deaminase (295 aa).

CMP/dCMP-type deaminase domains are found at residues 48–168 and 187–295; these read ADDE…FGPA and EETT…YLAI. 89–91 provides a ligand contact to substrate; the sequence is NLE. A Zn(2+)-binding site is contributed by His-102. Glu-104 serves as the catalytic Proton donor. Zn(2+) contacts are provided by Cys-129 and Cys-132.

It belongs to the cytidine and deoxycytidylate deaminase family. In terms of assembly, homodimer. Zn(2+) is required as a cofactor.

It catalyses the reaction cytidine + H2O + H(+) = uridine + NH4(+). The enzyme catalyses 2'-deoxycytidine + H2O + H(+) = 2'-deoxyuridine + NH4(+). Functionally, this enzyme scavenges exogenous and endogenous cytidine and 2'-deoxycytidine for UMP synthesis. In Vibrio atlanticus (strain LGP32) (Vibrio splendidus (strain Mel32)), this protein is Cytidine deaminase.